We begin with the raw amino-acid sequence, 244 residues long: tRNA (guanine-N(1)-)-methyltransferase (244 aa).

Residues Gly-120 and 140–145 (IGDYIL) contribute to the S-adenosyl-L-methionine site.

The protein belongs to the RNA methyltransferase TrmD family. In terms of assembly, homodimer.

It localises to the cytoplasm. The catalysed reaction is guanosine(37) in tRNA + S-adenosyl-L-methionine = N(1)-methylguanosine(37) in tRNA + S-adenosyl-L-homocysteine + H(+). Functionally, specifically methylates guanosine-37 in various tRNAs. This Brucella abortus (strain S19) protein is tRNA (guanine-N(1)-)-methyltransferase.